The primary structure comprises 181 residues: ATP-dependent protease subunit HslV (181 aa).

The active site involves threonine 9. Alanine 166, cysteine 169, and threonine 172 together coordinate Na(+).

Belongs to the peptidase T1B family. HslV subfamily. As to quaternary structure, a double ring-shaped homohexamer of HslV is capped on each side by a ring-shaped HslU homohexamer. The assembly of the HslU/HslV complex is dependent on binding of ATP.

The protein localises to the cytoplasm. The enzyme catalyses ATP-dependent cleavage of peptide bonds with broad specificity.. Allosterically activated by HslU binding. In terms of biological role, protease subunit of a proteasome-like degradation complex believed to be a general protein degrading machinery. The polypeptide is ATP-dependent protease subunit HslV (Staphylococcus aureus (strain bovine RF122 / ET3-1)).